Here is a 205-residue protein sequence, read N- to C-terminus: uncharacterized protein (205 aa).

Transmembrane regions (helical) follow at residues 4-24 (LAFL…AIDD), 105-125 (KWFI…LWIL), 130-150 (FLLF…KIPN), 151-171 (WLFN…VPEC), and 182-202 (ITIP…KFII).

The protein localises to the cell membrane. This is an uncharacterized protein from Methanocaldococcus jannaschii (strain ATCC 43067 / DSM 2661 / JAL-1 / JCM 10045 / NBRC 100440) (Methanococcus jannaschii).